Here is a 148-residue protein sequence, read N- to C-terminus: uncharacterized protein (148 aa).

This is an uncharacterized protein from Pyrococcus woesei.